The sequence spans 813 residues: Immunoglobulin superfamily DCC subclass member 3 (813 aa).

Residues 1 to 21 (MAEPRTASPRRLPALRRPGFL) form a disordered region. Residues 1 to 47 (MAEPRTASPRRLPALRRPGFLPPLLPPPPPPLLLLLLLLPLPAPSLG) form the signal peptide. Over residues 9 to 19 (PRRLPALRRPG) the composition is skewed to low complexity. 4 consecutive Ig-like C2-type domains span residues 49-151 (GHSA…ATMS), 151-232 (SDFH…VRVS), 250-333 (PTIL…RTAQ), and 341-428 (PAEF…ARLT). Disulfide bonds link Cys-75–Cys-129 and Cys-172–Cys-221. Residue Asn-105 is glycosylated (N-linked (GlcNAc...) asparagine). N-linked (GlcNAc...) asparagine glycosylation occurs at Asn-258. Disulfide bonds link Cys-271-Cys-319 and Cys-363-Cys-412. N-linked (GlcNAc...) asparagine glycosylation is found at Asn-393 and Asn-394. Fibronectin type-III domains lie at 438–532 (PPRN…TLGE) and 535–630 (VPPP…ASER). 3 N-linked (GlcNAc...) asparagine glycosylation sites follow: Asn-592, Asn-616, and Asn-646. A helical membrane pass occupies residues 653-673 (IVIGIHIGVTCIIFCVLFLLF). 2 disordered regions span residues 689–724 (LSPP…EKPV) and 775–813 (TTEA…AAPQ).

Belongs to the immunoglobulin superfamily. DCC family. In terms of tissue distribution, detected in cerebellum, kidney, heart, lung, skeletal muscle and spleen.

The protein resides in the membrane. This chain is Immunoglobulin superfamily DCC subclass member 3 (Igdcc3), found in Mus musculus (Mouse).